Reading from the N-terminus, the 545-residue chain is Chaperonin GroEL 2 (545 aa).

ATP-binding positions include T29–P32, D86–T90, G413, D477–A479, and D493. The disordered stretch occupies residues P526 to F545. The span at G534–F545 shows a compositional bias: basic residues.

This sequence belongs to the chaperonin (HSP60) family. As to quaternary structure, forms a cylinder of 14 subunits composed of two heptameric rings stacked back-to-back. Interacts with the co-chaperonin GroES.

It is found in the cytoplasm. The enzyme catalyses ATP + H2O + a folded polypeptide = ADP + phosphate + an unfolded polypeptide.. Functionally, together with its co-chaperonin GroES, plays an essential role in assisting protein folding. The GroEL-GroES system forms a nano-cage that allows encapsulation of the non-native substrate proteins and provides a physical environment optimized to promote and accelerate protein folding. The protein is Chaperonin GroEL 2 of Salinispora arenicola (strain CNS-205).